A 515-amino-acid chain; its full sequence is Phenylalanine--tRNA ligase beta subunit (515 aa).

In terms of domain architecture, B5 spans 263 to 334 (HEYVKIYVDE…IVMGYNQMPR (72 aa)). 4 residues coordinate Mg(2+): Asn-312, Asp-318, Glu-321, and Asp-322.

Belongs to the phenylalanyl-tRNA synthetase beta subunit family. Type 2 subfamily. Tetramer of two alpha and two beta subunits. It depends on Mg(2+) as a cofactor.

Its subcellular location is the cytoplasm. The catalysed reaction is tRNA(Phe) + L-phenylalanine + ATP = L-phenylalanyl-tRNA(Phe) + AMP + diphosphate + H(+). The sequence is that of Phenylalanine--tRNA ligase beta subunit from Pyrobaculum aerophilum (strain ATCC 51768 / DSM 7523 / JCM 9630 / CIP 104966 / NBRC 100827 / IM2).